The primary structure comprises 423 residues: Serine--tRNA ligase (423 aa).

Basic and acidic residues predominate over residues 1 to 12 (MIDLKALRENPD). Positions 1-26 (MIDLKALRENPDVGRASQRSRGEDPE) are disordered. 230-232 (TSE) provides a ligand contact to L-serine. Residues 261–263 (RRE) and Val-277 each bind ATP. Position 284 (Glu-284) interacts with L-serine. Residue 348–351 (ELTS) coordinates ATP. Residue Thr-383 participates in L-serine binding.

The protein belongs to the class-II aminoacyl-tRNA synthetase family. Type-1 seryl-tRNA synthetase subfamily. As to quaternary structure, homodimer. The tRNA molecule binds across the dimer.

Its subcellular location is the cytoplasm. It catalyses the reaction tRNA(Ser) + L-serine + ATP = L-seryl-tRNA(Ser) + AMP + diphosphate + H(+). It carries out the reaction tRNA(Sec) + L-serine + ATP = L-seryl-tRNA(Sec) + AMP + diphosphate + H(+). Its pathway is aminoacyl-tRNA biosynthesis; selenocysteinyl-tRNA(Sec) biosynthesis; L-seryl-tRNA(Sec) from L-serine and tRNA(Sec): step 1/1. Catalyzes the attachment of serine to tRNA(Ser). Is also able to aminoacylate tRNA(Sec) with serine, to form the misacylated tRNA L-seryl-tRNA(Sec), which will be further converted into selenocysteinyl-tRNA(Sec). The polypeptide is Serine--tRNA ligase (Beutenbergia cavernae (strain ATCC BAA-8 / DSM 12333 / CCUG 43141 / JCM 11478 / NBRC 16432 / NCIMB 13614 / HKI 0122)).